Here is a 154-residue protein sequence, read N- to C-terminus: Putative esterase AF_2264 (154 aa).

Belongs to the thioesterase PaaI family.

The chain is Putative esterase AF_2264 from Archaeoglobus fulgidus (strain ATCC 49558 / DSM 4304 / JCM 9628 / NBRC 100126 / VC-16).